Reading from the N-terminus, the 59-residue chain is Ferredoxin-2 (59 aa).

4Fe-4S ferredoxin-type domains are found at residues 3–32 (YSVI…LQNG) and 33–59 (KAVP…AIVE). Residues cysteine 12, cysteine 15, cysteine 18, cysteine 22, cysteine 42, cysteine 45, cysteine 48, and cysteine 52 each contribute to the [4Fe-4S] cluster site.

Homodimer. [4Fe-4S] cluster serves as cofactor.

The protein resides in the periplasm. Ferredoxins are iron-sulfur proteins that transfer electrons in a wide variety of metabolic reactions. This is Ferredoxin-2 from Desulfomicrobium norvegicum (strain DSM 1741 / NCIMB 8310) (Desulfovibrio baculatus (strain Norway 4)).